Consider the following 213-residue polypeptide: Ribonuclease HII (213 aa).

The region spanning 18–213 is the RNase H type-2 domain; sequence GLHAGVDEVG…RPVKERLAKR (196 aa). A divalent metal cation contacts are provided by Asp24, Glu25, and Asp116.

This sequence belongs to the RNase HII family. Requires Mn(2+) as cofactor. Mg(2+) is required as a cofactor.

The protein localises to the cytoplasm. It carries out the reaction Endonucleolytic cleavage to 5'-phosphomonoester.. Its function is as follows. Endonuclease that specifically degrades the RNA of RNA-DNA hybrids. In Shewanella woodyi (strain ATCC 51908 / MS32), this protein is Ribonuclease HII.